Consider the following 70-residue polypeptide: DNA-binding transcriptional activator AlpA (70 aa).

Residues 12–31 (LPAVIQKTGMARATIYDWLN) constitute a DNA-binding region (H-T-H motif).

Its function is as follows. Positive regulator of the expression of the slpA gene. When overexpressed, leads to suppression of the capsule overproduction and UV sensitivity phenotypes of cells mutant for the Lon ATP-dependent protease. Part of the cryptic P4-like prophage CP4-57. Overexpression of AlpA leads to excision of the CP4-57 prophage by IntA. This inactivates ssrA (the gene upstream of the prophage) that encodes tmRNA which is required to rescue stalled ribosomes in a process known as trans-translation. This Escherichia coli (strain K12) protein is DNA-binding transcriptional activator AlpA.